The sequence spans 209 residues: Large ribosomal subunit protein uL4 (209 aa).

Residues 45–78 (RQGTHKAKERAEVAGSTRKIKKQKGTGTARAGSA) form a disordered region.

This sequence belongs to the universal ribosomal protein uL4 family. As to quaternary structure, part of the 50S ribosomal subunit.

One of the primary rRNA binding proteins, this protein initially binds near the 5'-end of the 23S rRNA. It is important during the early stages of 50S assembly. It makes multiple contacts with different domains of the 23S rRNA in the assembled 50S subunit and ribosome. Functionally, forms part of the polypeptide exit tunnel. The protein is Large ribosomal subunit protein uL4 of Flavobacterium psychrophilum (strain ATCC 49511 / DSM 21280 / CIP 103535 / JIP02/86).